The primary structure comprises 765 residues: Putative chloride channel-like protein CLC-g (765 aa).

12 helical membrane-spanning segments follow: residues 67-87 (VFMKWLLCFCIGIIVSLIGFA), 116-136 (FVVFSVTNLILTLFASVITAF), 167-187 (LIIKIIGNISAVSASLLIGKA), 190-210 (MVHTGACVASILGQGGSKRYR), 232-252 (GAAAGIAASFRAPVGGVLFAL), 262-282 (ALLWRIFFSTAVVAIVLRALI), 315-335 (VLPVLLLGVVGGILGSLYNFL), 355-375 (ILLACAISIFTSCLLFGLPFL), 438-458 (FSVLVFFVTCFFLSIFSYGIV), 462-482 (GLFVPVIVTGASYGRFVGMLL), 494-514 (AVLGAASFLGGTMRMTVSTCV), and 515-535 (ILLELTNNLLLLPMMMVVLLI). The CBS 1 domain occupies 568–640 (MRQLLVGDVV…LLKKRVFMPS (73 aa)). Ser646 carries the phosphoserine modification. The CBS 2 domain occupies 687–748 (FSNASPYTVV…PEHILGLHPS (62 aa)). Residues 715–735 (HLLVIPKTSNRPPVVGILTRH) traverse the membrane as a helical segment.

It belongs to the chloride channel (TC 2.A.49) family. Homodimer. Interacts with PP2A5.

Its subcellular location is the membrane. Functionally, putative voltage-gated chloride channel. The polypeptide is Putative chloride channel-like protein CLC-g (CLC-G) (Arabidopsis thaliana (Mouse-ear cress)).